Here is a 230-residue protein sequence, read N- to C-terminus: MKRGKKYLTSLRIFDVKKTYPLQEAISLAKQTQVAKFDATVECAFHLNLDLKKVDQNLRGALVLPHGTGKVLKVAVLAKGEQAKQAQEAQADYVGDQDLIDKIAKNWFDFDVLVATPEMMPQLSKLGRLLGPKGLMPNPKTGTVTNDVLQAVKEIKNGKIEYRLDKSGNIHTILGKVSFDEAKLLENLKTLYLQLMAVKPRTVKGTYIKSVTISTTMAPGIKIDPVTISQ.

The protein belongs to the universal ribosomal protein uL1 family. As to quaternary structure, part of the 50S ribosomal subunit.

Functionally, binds directly to 23S rRNA. The L1 stalk is quite mobile in the ribosome, and is involved in E site tRNA release. Its function is as follows. Protein L1 is also a translational repressor protein, it controls the translation of the L11 operon by binding to its mRNA. The chain is Large ribosomal subunit protein uL1 from Aster yellows witches'-broom phytoplasma (strain AYWB).